The following is a 234-amino-acid chain: Large ribosomal subunit protein uL1 (234 aa).

The protein belongs to the universal ribosomal protein uL1 family. Part of the 50S ribosomal subunit.

Its function is as follows. Binds directly to 23S rRNA. The L1 stalk is quite mobile in the ribosome, and is involved in E site tRNA release. Functionally, protein L1 is also a translational repressor protein, it controls the translation of the L11 operon by binding to its mRNA. The chain is Large ribosomal subunit protein uL1 from Anaeromyxobacter sp. (strain Fw109-5).